The chain runs to 385 residues: S-adenosylmethionine synthase (385 aa).

Residue H16 participates in ATP binding. A Mg(2+)-binding site is contributed by D18. E44 lines the K(+) pocket. L-methionine is bound by residues E57 and Q100. The tract at residues 100–110 (QSPDINQGVDR) is flexible loop. Residues 164–166 (DGK), 230–231 (KF), D239, 245–246 (RK), A262, and K266 each bind ATP. D239 contacts L-methionine. Residue K270 participates in L-methionine binding.

This sequence belongs to the AdoMet synthase family. As to quaternary structure, homotetramer; dimer of dimers. Requires Mg(2+) as cofactor. It depends on K(+) as a cofactor.

The protein localises to the cytoplasm. It catalyses the reaction L-methionine + ATP + H2O = S-adenosyl-L-methionine + phosphate + diphosphate. The protein operates within amino-acid biosynthesis; S-adenosyl-L-methionine biosynthesis; S-adenosyl-L-methionine from L-methionine: step 1/1. Its function is as follows. Catalyzes the formation of S-adenosylmethionine (AdoMet) from methionine and ATP. The overall synthetic reaction is composed of two sequential steps, AdoMet formation and the subsequent tripolyphosphate hydrolysis which occurs prior to release of AdoMet from the enzyme. This Helicobacter pylori (strain P12) protein is S-adenosylmethionine synthase.